We begin with the raw amino-acid sequence, 206 residues long: Large ribosomal subunit protein bL17 (206 aa).

The segment covering 130 to 141 (ERARGTRFEARR) has biased composition (basic and acidic residues). A disordered region spans residues 130 to 206 (ERARGTRFEA…SGAGEQNSAN (77 aa)). 2 stretches are compositionally biased toward low complexity: residues 160-181 (TAAA…GAAG) and 189-200 (DDSGIGDDSGAG).

The protein belongs to the bacterial ribosomal protein bL17 family. In terms of assembly, part of the 50S ribosomal subunit. Contacts protein L32.

The polypeptide is Large ribosomal subunit protein bL17 (Frankia casuarinae (strain DSM 45818 / CECT 9043 / HFP020203 / CcI3)).